Here is a 231-residue protein sequence, read N- to C-terminus: Cytidylate kinase (231 aa).

Residue 16-24 coordinates ATP; it reads GPAASGKST. The disordered stretch occupies residues 176–205; the sequence is PDLDSLEQEITKRDRDDAEREHAPLKKHPE. A compositionally biased stretch (basic and acidic residues) spans 184-205; that stretch reads EITKRDRDDAEREHAPLKKHPE.

Belongs to the cytidylate kinase family. Type 1 subfamily.

It is found in the cytoplasm. The enzyme catalyses CMP + ATP = CDP + ADP. It catalyses the reaction dCMP + ATP = dCDP + ADP. In Pelodictyon phaeoclathratiforme (strain DSM 5477 / BU-1), this protein is Cytidylate kinase.